Reading from the N-terminus, the 146-residue chain is VHLTDAEKAAVTGLWGKVKVDEYGGEALGRLLVVYPWTQRFFEHFGDLSNADAIMHNPKVLAHGKKVLSSFGDGLNHLDNLKGTFAQLSELHCDKLHVDPENFRLLGNVLVVVLARHFHEEFTPDVQAAFQKVVTGVANALAHKYH.

V1 carries the post-translational modification N-acetylvaline; partial. Positions 2-146 constitute a Globin domain; the sequence is HLTDAEKAAV…VANALAHKYH (145 aa). Position 12 is a phosphothreonine (T12). The residue at position 59 (K59) is an N6-acetyllysine. H63 contributes to the heme b binding site. The residue at position 82 (K82) is an N6-acetyllysine. Position 92 (H92) interacts with heme b. At C93 the chain carries S-nitrosocysteine. K144 bears the N6-acetyllysine mark.

This sequence belongs to the globin family. Heterotetramer of two alpha chains and two beta chains. In terms of tissue distribution, red blood cells.

Its function is as follows. Involved in oxygen transport from the lung to the various peripheral tissues. This chain is Hemoglobin subunit beta (HBB), found in Procavia capensis habessinica (Abyssinian hyrax).